A 612-amino-acid chain; its full sequence is Chaperone protein DnaK (612 aa).

T173 carries the post-translational modification Phosphothreonine; by autocatalysis. The segment covering 524 to 544 (DDKVSEEDKQKAESAKDELKQ) has biased composition (basic and acidic residues). Disordered stretches follow at residues 524 to 560 (DDKV…KKDA) and 572 to 612 (LYEQ…DDKK). The segment covering 574–586 (EQVQQEAQQASGE) has biased composition (low complexity). Residues 587 to 612 (QGEESGNQDDDVVDADYSEVDDDDKK) show a composition bias toward acidic residues.

This sequence belongs to the heat shock protein 70 family.

In terms of biological role, acts as a chaperone. The chain is Chaperone protein DnaK from Oceanobacillus iheyensis (strain DSM 14371 / CIP 107618 / JCM 11309 / KCTC 3954 / HTE831).